A 70-amino-acid polypeptide reads, in one-letter code: ATP synthase subunit c (70 aa).

Helical transmembrane passes span 4 to 24 (IAAG…NGLV) and 47 to 67 (FLGV…AFLV).

This sequence belongs to the ATPase C chain family. F-type ATPases have 2 components, F(1) - the catalytic core - and F(0) - the membrane proton channel. F(1) has five subunits: alpha(3), beta(3), gamma(1), delta(1), epsilon(1). F(0) has three main subunits: a(1), b(2) and c(10-14). The alpha and beta chains form an alternating ring which encloses part of the gamma chain. F(1) is attached to F(0) by a central stalk formed by the gamma and epsilon chains, while a peripheral stalk is formed by the delta and b chains.

Its subcellular location is the cell membrane. F(1)F(0) ATP synthase produces ATP from ADP in the presence of a proton or sodium gradient. F-type ATPases consist of two structural domains, F(1) containing the extramembraneous catalytic core and F(0) containing the membrane proton channel, linked together by a central stalk and a peripheral stalk. During catalysis, ATP synthesis in the catalytic domain of F(1) is coupled via a rotary mechanism of the central stalk subunits to proton translocation. Functionally, key component of the F(0) channel; it plays a direct role in translocation across the membrane. A homomeric c-ring of between 10-14 subunits forms the central stalk rotor element with the F(1) delta and epsilon subunits. In Limosilactobacillus fermentum (strain NBRC 3956 / LMG 18251) (Lactobacillus fermentum), this protein is ATP synthase subunit c.